The sequence spans 255 residues: MASREHLLLDPAALAVSWADPAAVEIPPELLAALGEYLSARRSDGEAEADAEAEADDEFMMYEFKVRRCARARSHDWTACPYAHPGEAARRRDPRRVAYTGEPCPDFRRRPGAACPRGSTCPFAHGTFELWLHPSRYRTRPCRAGVACRRRVCFFAHTAGELRAGSKEDSPLSLSPKSTLASLWESPPVSPVEGRRWVDGIDECDADAEMEELMFAMRELGLRKVRPSASSVTPVLPPVTDEDGPDFGWVSELVM.

C3H1-type zinc fingers lie at residues 98 to 128 (AYTG…HGTF) and 137 to 159 (YRTR…AHTA).

In Oryza sativa subsp. japonica (Rice), this protein is Zinc finger CCCH domain-containing protein 37.